A 497-amino-acid chain; its full sequence is Cytochrome P450 26A1 (497 aa).

C442 provides a ligand contact to heme.

The protein belongs to the cytochrome P450 family. Requires heme as cofactor.

It localises to the endoplasmic reticulum membrane. Its subcellular location is the microsome membrane. It catalyses the reaction all-trans-retinoate + reduced [NADPH--hemoprotein reductase] + O2 = all-trans-(4S)-hydroxyretinoate + oxidized [NADPH--hemoprotein reductase] + H2O + H(+). It carries out the reaction all-trans-(4S)-hydroxyretinoate + reduced [NADPH--hemoprotein reductase] + O2 = all-trans-(4S,16)-dihydroxyretinoate + oxidized [NADPH--hemoprotein reductase] + H2O + H(+). The catalysed reaction is all-trans-retinoate + reduced [NADPH--hemoprotein reductase] + O2 = all-trans-18-hydroxyretinoate + oxidized [NADPH--hemoprotein reductase] + H2O + H(+). In terms of biological role, a cytochrome P450 monooxygenase involved in the metabolism of retinoates (RAs), the active metabolites of vitamin A, and critical signaling molecules in animals. RAs exist as at least four different isomers: all-trans-RA (atRA), 9-cis-RA, 13-cis-RA, and 9,13-dicis-RA, where atRA is considered to be the biologically active isomer, although 9-cis-RA and 13-cis-RA also have activity. Catalyzes the hydroxylation of atRA primarily at C-4 and C-18, thereby contributing to the regulation of atRA homeostasis and signaling. Hydroxylation of atRA limits its biological activity and initiates a degradative process leading to its eventual elimination. Involved in the convertion of atRA to all-trans-4-oxo-RA. Able to metabolize other RAs such as 9-cis, 13-cis and 9,13-di-cis RA. Can oxidize all-trans-13,14-dihydroretinoate (DRA) to metabolites which could include all-trans-4-oxo-DRA, all-trans-4-hydroxy-DRA, all-trans-5,8-epoxy-DRA, and all-trans-18-hydroxy-DRA. May play a role in the oxidative metabolism of xenobiotics such as tazarotenic acid. This is Cytochrome P450 26A1 from Mus musculus (Mouse).